A 311-amino-acid chain; its full sequence is Malate dehydrogenase (311 aa).

Residues Gly-7 to Gly-13 and Asp-34 contribute to the NAD(+) site. Substrate contacts are provided by Arg-81 and Arg-87. NAD(+) contacts are provided by residues Asn-94 and Ile-117 to Asn-119. Substrate contacts are provided by Asn-119 and Arg-153. Catalysis depends on His-177, which acts as the Proton acceptor. Met-227 contributes to the NAD(+) binding site.

This sequence belongs to the LDH/MDH superfamily. MDH type 1 family. As to quaternary structure, homodimer.

The catalysed reaction is (S)-malate + NAD(+) = oxaloacetate + NADH + H(+). Its function is as follows. Catalyzes the reversible oxidation of malate to oxaloacetate. This is Malate dehydrogenase from Aeromonas salmonicida (strain A449).